We begin with the raw amino-acid sequence, 260 residues long: WUSCHEL-related homeobox 2 (260 aa).

A DNA-binding region (homeobox; WUS-type) is located at residues Ala-10–Gln-74.

The protein belongs to the WUS homeobox family.

It localises to the nucleus. In terms of biological role, probable transcription factor involved in embryonic patterning. Required for apical embryo development after fertilization. Its specific localization to the apical daughter cell of the zygote, while WOX8 is confined to the basal cell, suggests that the asymmetric division of the plant zygote separates determinants of apical and basal cell fates. This chain is WUSCHEL-related homeobox 2 (WOX2), found in Arabidopsis thaliana (Mouse-ear cress).